Consider the following 450-residue polypeptide: Probable ECA polymerase (450 aa).

11 helical membrane-spanning segments follow: residues 6–26, 37–57, 63–83, 118–138, 155–175, 181–201, 207–227, 228–248, 341–361, 378–398, and 410–430; these read FSGL…LTWF, VFFS…TSVL, VGVA…CFYA, VILM…NGFL, GVAL…VYFL, AWLF…MIVG, IIIA…ISLW, MLAA…LKRY, LVVM…GLII, YKAA…IVLA, and VFFI…YWLF.

Belongs to the WzyE family. Probably part of a complex composed of WzxE, WzyE and WzzE.

It is found in the cell inner membrane. Its pathway is bacterial outer membrane biogenesis; enterobacterial common antigen biosynthesis. Functionally, probably involved in the polymerization of enterobacterial common antigen (ECA) trisaccharide repeat units. In Escherichia fergusonii (strain ATCC 35469 / DSM 13698 / CCUG 18766 / IAM 14443 / JCM 21226 / LMG 7866 / NBRC 102419 / NCTC 12128 / CDC 0568-73), this protein is Probable ECA polymerase.